We begin with the raw amino-acid sequence, 891 residues long: Protein translocase subunit SecA 1 (891 aa).

ATP is bound by residues Gln85, 103-107 (GEGKT), and Asp491. Zn(2+) contacts are provided by Cys877, Cys879, Cys888, and Cys889.

Belongs to the SecA family. In terms of assembly, monomer and homodimer. Part of the essential Sec protein translocation apparatus which comprises SecA, SecYEG and auxiliary proteins SecDF. Other proteins may also be involved. Requires Zn(2+) as cofactor.

Its subcellular location is the cell membrane. It localises to the cytoplasm. The catalysed reaction is ATP + H2O + cellular proteinSide 1 = ADP + phosphate + cellular proteinSide 2.. Part of the Sec protein translocase complex. Interacts with the SecYEG preprotein conducting channel. Has a central role in coupling the hydrolysis of ATP to the transfer of proteins into and across the cell membrane, serving as an ATP-driven molecular motor driving the stepwise translocation of polypeptide chains across the membrane. The protein is Protein translocase subunit SecA 1 of Clostridioides difficile (strain 630) (Peptoclostridium difficile).